The chain runs to 544 residues: Chaperonin GroEL 1 (544 aa).

ATP is bound by residues threonine 29–proline 32, aspartate 86–threonine 90, glycine 413, asparagine 479–alanine 481, and aspartate 495.

Belongs to the chaperonin (HSP60) family. In terms of assembly, forms a cylinder of 14 subunits composed of two heptameric rings stacked back-to-back. Interacts with the co-chaperonin GroES.

The protein localises to the cytoplasm. It carries out the reaction ATP + H2O + a folded polypeptide = ADP + phosphate + an unfolded polypeptide.. Functionally, together with its co-chaperonin GroES, plays an essential role in assisting protein folding. The GroEL-GroES system forms a nano-cage that allows encapsulation of the non-native substrate proteins and provides a physical environment optimized to promote and accelerate protein folding. This Synechococcus sp. (strain CC9902) protein is Chaperonin GroEL 1.